A 67-amino-acid polypeptide reads, in one-letter code: Surface composition regulator (67 aa).

The protein belongs to the GlgS family.

Its function is as follows. Major determinant of cell surface composition. Negatively regulates motility, adhesion and synthesis of biofilm exopolysaccharides. The chain is Surface composition regulator from Salmonella enteritidis PT4 (strain P125109).